Consider the following 142-residue polypeptide: SPbeta prophage-derived deoxyuridine 5'-triphosphate nucleotidohydrolase YosS (142 aa).

DUMP-binding residues include Ser-62 and Asn-74. Catalysis depends on Asp-80, which acts as the Proton acceptor. Positions 83 and 91 each coordinate dUMP.

It belongs to the dUTPase family. In terms of assembly, homotrimer. It depends on Mg(2+) as a cofactor.

It catalyses the reaction dUTP + H2O = dUMP + diphosphate + H(+). The protein operates within pyrimidine metabolism; dUMP biosynthesis; dUMP from dCTP (dUTP route): step 2/2. Involved in nucleotide metabolism: produces dUMP, the immediate precursor of thymidine nucleotides and decreases the intracellular concentration of dUTP, so that uracil cannot be incorporated into DNA. The Ser-62 side chain changes its position upon ligand-binding to make contacts with the nucleotide phosphates. The sequence is that of SPbeta prophage-derived deoxyuridine 5'-triphosphate nucleotidohydrolase YosS from Bacillus subtilis (strain 168).